The following is a 796-amino-acid chain: YY1-associated protein 1 (796 aa).

Disordered stretches follow at residues 1–45 (MEEE…ATPS) and 463–488 (IQPS…SEAP). The segment covering 23–36 (PPDKREGSAVDPGK) has biased composition (basic and acidic residues). A compositionally biased stretch (low complexity) spans 463–472 (IQPSPSLQPS). A compositionally biased stretch (polar residues) spans 473-485 (FNPGKTPAQSTHS). At S724 the chain carries Phosphoserine. A disordered region spans residues 755 to 776 (RQALEPLPQGIQESLNNSSPGD). A compositionally biased stretch (polar residues) spans 765-774 (IQESLNNSSP).

As to quaternary structure, interacts with YY1. Interacts with MAD2L2. Interacts with INO80. As to expression, ubiquitous. Detected in small intestine, skeletal muscle, lung, pancreas, brain, stomach, spleen, colon and heart. Detected at very low levels in healthy liver. Highly expressed in most liver carcinomas.

The protein resides in the cytoplasm. Its subcellular location is the nucleus. It localises to the nucleoplasm. The protein localises to the nucleolus. Associates with the INO80 chromatin remodeling complex, which is responsible for transcriptional regulation, DNA repair, and replication. Enhances transcription activation by YY1. Plays a role in cell cycle regulation. The chain is YY1-associated protein 1 from Homo sapiens (Human).